Here is a 74-residue protein sequence, read N- to C-terminus: Small ribosomal subunit protein uS15 (74 aa).

This sequence belongs to the universal ribosomal protein uS15 family. In terms of assembly, part of the 30S ribosomal subunit. Forms a bridge to the 50S subunit in the 70S ribosome, contacting the 23S rRNA.

Its function is as follows. One of the primary rRNA binding proteins, it binds directly to 16S rRNA where it helps nucleate assembly of the platform of the 30S subunit by binding and bridging several RNA helices of the 16S rRNA. In terms of biological role, forms an intersubunit bridge (bridge B4) with the 23S rRNA of the 50S subunit in the ribosome. The chain is Small ribosomal subunit protein uS15 from Aster yellows witches'-broom phytoplasma (strain AYWB).